The sequence spans 185 residues: MIKEVIVVEGRDDITAVKRAVDAEMIAVGGFGINSKIISKIKEAQKRRGVIVLTDPDFAGEKIRSIISKRVKGIKHARISQSEGTKNGDIGVENASPESIIRALNNAKCETQKKTYEFTIEDMLFFKLVGNSEAKKRRDLVGNELGIGYSNGAQFLSRLNNFGISKEELINAVNTVNRRYYDEGI.

In terms of domain architecture, Toprim spans 3 to 84 (KEVIVVEGRD…KHARISQSEG (82 aa)). Residues Glu9, Asp55, and Asp57 each contribute to the Mg(2+) site.

The protein belongs to the ribonuclease M5 family. Requires Mg(2+) as cofactor.

Its subcellular location is the cytoplasm. It carries out the reaction Endonucleolytic cleavage of RNA, removing 21 and 42 nucleotides, respectively, from the 5'- and 3'-termini of a 5S-rRNA precursor.. Its function is as follows. Required for correct processing of both the 5' and 3' ends of 5S rRNA precursor. Cleaves both sides of a double-stranded region yielding mature 5S rRNA in one step. The polypeptide is Ribonuclease M5 (Clostridium acetobutylicum (strain ATCC 824 / DSM 792 / JCM 1419 / IAM 19013 / LMG 5710 / NBRC 13948 / NRRL B-527 / VKM B-1787 / 2291 / W)).